The primary structure comprises 312 residues: Malate dehydrogenase (312 aa).

Residues G12–G17 and D36 contribute to the NAD(+) site. Residues R87 and R93 each contribute to the substrate site. NAD(+)-binding positions include N100 and L123 to N125. N125 lines the substrate pocket. S149 carries the post-translational modification Phosphoserine. R156 provides a ligand contact to substrate. H180 functions as the Proton acceptor in the catalytic mechanism.

The protein belongs to the LDH/MDH superfamily. MDH type 3 family.

It catalyses the reaction (S)-malate + NAD(+) = oxaloacetate + NADH + H(+). In terms of biological role, catalyzes the reversible oxidation of malate to oxaloacetate. This is Malate dehydrogenase from Bacillus licheniformis (strain ATCC 14580 / DSM 13 / JCM 2505 / CCUG 7422 / NBRC 12200 / NCIMB 9375 / NCTC 10341 / NRRL NRS-1264 / Gibson 46).